The following is a 375-amino-acid chain: Squamosa promoter-binding-like protein 9 (375 aa).

Disordered stretches follow at residues 1–30 (MEMG…SFSG) and 43–73 (GGGG…QIPR). Positions 18–30 (SGGSSTESSSFSG) are enriched in low complexity. The segment at 71-148 (IPRCQVEGCG…AGHNERRRKP (78 aa)) adopts an SBP-type zinc-finger fold. The Zn(2+) site is built by Cys74, Cys79, Cys96, His99, Cys115, Cys118, His122, and Cys134. A Bipartite nuclear localization signal motif is present at residues 131–147 (KRSCRRRLAGHNERRRK). Disordered regions lie at residues 252–278 (LLSN…NTWR) and 345–375 (SDHH…NWSL). Residues 262–275 (NNNNNNNNNNNNNN) are compositionally biased toward low complexity. The span at 345-362 (SDHHHQSRRQYMEDENTR) shows a compositional bias: basic and acidic residues. Residues 363–375 (AYDSSSHHTNWSL) are compositionally biased toward polar residues.

Requires Zn(2+) as cofactor.

The protein localises to the nucleus. It localises to the cytoplasm. Its function is as follows. Trans-acting factor that binds specifically to the consensus nucleotide sequence 5'-TNCGTACAA-3'. The chain is Squamosa promoter-binding-like protein 9 (SPL9) from Arabidopsis thaliana (Mouse-ear cress).